A 69-amino-acid polypeptide reads, in one-letter code: Conotoxin Eb6.20 (69 aa).

The signal sequence occupies residues Val-1–Ala-17. The propeptide occupies Glu-18–Arg-41. Cystine bridges form between Cys-43/Cys-57, Cys-50/Cys-61, and Cys-56/Cys-68.

Belongs to the conotoxin O1 superfamily. In terms of tissue distribution, expressed by the venom duct.

It localises to the secreted. This Conus ebraeus (Hebrew cone) protein is Conotoxin Eb6.20 (E1).